Here is a 97-residue protein sequence, read N- to C-terminus: Co-chaperonin GroES (97 aa).

Belongs to the GroES chaperonin family. In terms of assembly, heptamer of 7 subunits arranged in a ring. Interacts with the chaperonin GroEL.

It localises to the cytoplasm. Its function is as follows. Together with the chaperonin GroEL, plays an essential role in assisting protein folding. The GroEL-GroES system forms a nano-cage that allows encapsulation of the non-native substrate proteins and provides a physical environment optimized to promote and accelerate protein folding. GroES binds to the apical surface of the GroEL ring, thereby capping the opening of the GroEL channel. The polypeptide is Co-chaperonin GroES (Edwardsiella ictaluri (strain 93-146)).